We begin with the raw amino-acid sequence, 458 residues long: Oxysterol-binding protein-related protein 3B (458 aa).

Disordered regions lie at residues 47–66 (VINPEGSTDDAEEEASRGRW), 370–401 (DMSKSGYEKSSMEERQRAEKRTREEKGQAFTP), and 431–458 (RAAADNSEDNTDPKSIQFNPWQFQDLST). Basic and acidic residues predominate over residues 375 to 396 (GYEKSSMEERQRAEKRTREEKG). The span at 443–458 (PKSIQFNPWQFQDLST) shows a compositional bias: polar residues.

It belongs to the OSBP family. In terms of tissue distribution, expressed in roots, leaves, stems and flowers.

In terms of biological role, may be involved in the transport of sterols. In Arabidopsis thaliana (Mouse-ear cress), this protein is Oxysterol-binding protein-related protein 3B (ORP3B).